The sequence spans 388 residues: Succinate--CoA ligase [ADP-forming] subunit beta (388 aa).

An ATP-grasp domain is found at K9 to H244. ATP contacts are provided by residues K46, G53–G55, E99, T102, and E107. The Mg(2+) site is built by N199 and D213. Substrate is bound by residues N264 and G321–V323.

The protein belongs to the succinate/malate CoA ligase beta subunit family. As to quaternary structure, heterotetramer of two alpha and two beta subunits. It depends on Mg(2+) as a cofactor.

The enzyme catalyses succinate + ATP + CoA = succinyl-CoA + ADP + phosphate. It carries out the reaction GTP + succinate + CoA = succinyl-CoA + GDP + phosphate. It functions in the pathway carbohydrate metabolism; tricarboxylic acid cycle; succinate from succinyl-CoA (ligase route): step 1/1. Functionally, succinyl-CoA synthetase functions in the citric acid cycle (TCA), coupling the hydrolysis of succinyl-CoA to the synthesis of either ATP or GTP and thus represents the only step of substrate-level phosphorylation in the TCA. The beta subunit provides nucleotide specificity of the enzyme and binds the substrate succinate, while the binding sites for coenzyme A and phosphate are found in the alpha subunit. This is Succinate--CoA ligase [ADP-forming] subunit beta from Yersinia pseudotuberculosis serotype O:1b (strain IP 31758).